The sequence spans 924 residues: Ubiquitin carboxyl-terminal hydrolase 15 (924 aa).

Cys130, Cys133, Cys141, Cys144, Cys150, Cys154, His163, and Cys167 together coordinate Zn(2+). Residues 130 to 167 (CARCFGPAKTRCSRCKSVRYCSGKCQIIHWRVAHKDEC) form an MYND-type zinc finger. Over residues 226 to 236 (DITPQINTQGR) the composition is skewed to polar residues. 2 disordered regions span residues 226 to 301 (DITP…VDSS) and 317 to 366 (SHKH…TSKK). The segment covering 247 to 256 (ANRESCRRDS) has biased composition (basic and acidic residues). Residues 331-362 (GCPNTQYPSNGTRTATLPRTGINKSGEQSCTE) show a composition bias toward polar residues. One can recognise a USP domain in the interval 438–744 (RGLVNCGNSC…GAYMLFYMRS (307 aa)). Catalysis depends on Cys447, which acts as the Nucleophile. The Proton acceptor role is filled by His703. The tract at residues 750 to 793 (RGEHNGKAPVHHSQPRNEMKEQRKPVNRFKPRADHKNTESSSSE) is disordered. A compositionally biased stretch (basic and acidic residues) spans 764–773 (PRNEMKEQRK).

Belongs to the peptidase C19 family. Interacts with DA1. In terms of tissue distribution, highly expressed in rosette leaves and inflorescence. Expressed at low levels in cotyledons, stems, cauline leaves and siliques.

It localises to the cytoplasm. The protein localises to the nucleus. It catalyses the reaction Thiol-dependent hydrolysis of ester, thioester, amide, peptide and isopeptide bonds formed by the C-terminal Gly of ubiquitin (a 76-residue protein attached to proteins as an intracellular targeting signal).. Its function is as follows. Recognizes and hydrolyzes the peptide bond at the C-terminal Gly of ubiquitin. Involved in the processing of poly-ubiquitin precursors as well as that of ubiquitinated proteins. Involved in the regulation of organ size. Acts as a positive regulator of cell proliferation. Possesses deubiquitinating enzyme activity in vitro. The enzyme activity of UBP15 is required for its function in regulation of cell proliferation. Functions antagonistically in a common pathway with DA1 to regulate seed size. Acts maternally to regulate seed size by promoting cell proliferation in the integuments of ovules and developing seeds. Functions independently of DA2 and BB. The sequence is that of Ubiquitin carboxyl-terminal hydrolase 15 from Arabidopsis thaliana (Mouse-ear cress).